The primary structure comprises 106 residues: Terpredoxin (106 aa).

One can recognise a 2Fe-2S ferredoxin-type domain in the interval 2-106 (PRVVFIDEQS…GLIVRVPLPA (105 aa)). Positions 40, 46, 49, and 87 each coordinate [2Fe-2S] cluster.

Belongs to the adrenodoxin/putidaredoxin family. [2Fe-2S] cluster is required as a cofactor.

In terms of biological role, the oxidation of alpha-terpineol by cytochrome p450-TERP requires the participation of a flavoprotein, terpredoxin reductase, and an iron-sulfur protein, terpredoxin, to mediate the transfer of electrons from NADH to P450 for oxygen activation. The polypeptide is Terpredoxin (terPB) (Pseudomonas sp).